The following is a 302-amino-acid chain: Homoserine kinase (302 aa).

Residue 92-102 (PLARGLGSSAT) participates in ATP binding.

This sequence belongs to the GHMP kinase family. Homoserine kinase subfamily.

It is found in the cytoplasm. The catalysed reaction is L-homoserine + ATP = O-phospho-L-homoserine + ADP + H(+). The protein operates within amino-acid biosynthesis; L-threonine biosynthesis; L-threonine from L-aspartate: step 4/5. Its function is as follows. Catalyzes the ATP-dependent phosphorylation of L-homoserine to L-homoserine phosphate. The protein is Homoserine kinase of Trichormus variabilis (strain ATCC 29413 / PCC 7937) (Anabaena variabilis).